A 40-amino-acid chain; its full sequence is Photosystem II reaction center protein J (40 aa).

The chain crosses the membrane as a helical span at residues 8–28 (IPLWIIGTVAGILVIGLVGVF).

The protein belongs to the PsbJ family. As to quaternary structure, PSII is composed of 1 copy each of membrane proteins PsbA, PsbB, PsbC, PsbD, PsbE, PsbF, PsbH, PsbI, PsbJ, PsbK, PsbL, PsbM, PsbT, PsbX, PsbY, PsbZ, Psb30/Ycf12, at least 3 peripheral proteins of the oxygen-evolving complex and a large number of cofactors. It forms dimeric complexes.

The protein resides in the plastid. Its subcellular location is the chloroplast thylakoid membrane. Its function is as follows. One of the components of the core complex of photosystem II (PSII). PSII is a light-driven water:plastoquinone oxidoreductase that uses light energy to abstract electrons from H(2)O, generating O(2) and a proton gradient subsequently used for ATP formation. It consists of a core antenna complex that captures photons, and an electron transfer chain that converts photonic excitation into a charge separation. This chain is Photosystem II reaction center protein J, found in Helianthus annuus (Common sunflower).